The sequence spans 33 residues: Pardaxin P-4 (33 aa).

It belongs to the pardaxin family. As to quaternary structure, monomer. In aqueous solution exists as a tetramer.

Its subcellular location is the secreted. It is found in the target cell membrane. Functionally, exhibits unusual shark repellent and surfactant properties. Forms voltage-dependent, ion-permeable channels in membranes. At high concentration causes cell membrane lysis. This Pardachirus marmoratus (Finless sole) protein is Pardaxin P-4.